Consider the following 234-residue polypeptide: UPF0309 protein lmo0025 (234 aa).

One can recognise an SIS domain in the interval 31–205; that stretch reads VADSIMNDGI…ELMLEKGYTP (175 aa).

This sequence belongs to the UPF0309 family.

The chain is UPF0309 protein lmo0025 from Listeria monocytogenes serovar 1/2a (strain ATCC BAA-679 / EGD-e).